The primary structure comprises 1770 residues: NEDD4-binding protein 2 (1770 aa).

Positions 1-40 (MPRRRKNLGGNPFRKTANPKEVVVSSVASREEPTTTLPSM) are disordered. The region spanning 46 to 89 (DQEELFTSISEIFSDLDPDVVYLMLSECDFKVENAMDCLLELSA) is the CUE domain. Coiled-coil stretches lie at residues 90–177 (TDTK…NDSS) and 218–259 (HSVL…IAGC). The tract at residues 95-129 (EESSSQSFVASENQVGAAESKIMEKRPEEESEDSK) is disordered. Over residues 97-108 (SSSQSFVASENQ) the composition is skewed to polar residues. Residues 115–129 (KIMEKRPEEESEDSK) show a composition bias toward basic and acidic residues. 447–454 (GLPGSGKS) is an ATP binding site. 4 disordered regions span residues 712-756 (SKTD…GEIV), 795-822 (KTIGQRTKRNRKTEKTSSVQSDKKYNYP), 836-862 (DCVQQRGSPHESVEDGRKSQCDDASEP), and 890-913 (SLAQREHRSRMPKTGLSEPNLEIG). A compositionally biased stretch (basic and acidic residues) spans 843–856 (SPHESVEDGRKSQC). Phosphoserine is present on Ser-906. Thr-1210 carries the post-translational modification Phosphothreonine. Residues 1580 to 1606 (NENVTSHTGQKSKEKKPKKLKETEETP) are disordered. The Smr domain occupies 1691–1770 (LDLHGLHVDE…KPGCLKVMLK (80 aa)).

As to quaternary structure, binds NEDD4. Binds BCL3 and CREBBP. Ubiquitinated; this targets the protein for degradation by the proteasome.

Its subcellular location is the cytoplasm. Has 5'-polynucleotide kinase and nicking endonuclease activity. May play a role in DNA repair or recombination. The sequence is that of NEDD4-binding protein 2 (N4BP2) from Homo sapiens (Human).